The primary structure comprises 79 residues: Dolichyl-diphosphooligosaccharide--protein glycosyltransferase subunit TMEM258 (79 aa).

The next 2 membrane-spanning stretches (helical) occupy residues 18-38 (LPLL…AFTM) and 55-75 (FIAA…LLWV).

It belongs to the OST5 family. As to quaternary structure, component of the oligosaccharyltransferase (OST) complex.

The protein resides in the membrane. It functions in the pathway protein modification; protein glycosylation. Its function is as follows. Subunit of the oligosaccharyl transferase (OST) complex that catalyzes the initial transfer of a defined glycan (Glc(3)Man(9)GlcNAc(2) in eukaryotes) from the lipid carrier dolichol-pyrophosphate to an asparagine residue within an Asn-X-Ser/Thr consensus motif in nascent polypeptide chains, the first step in protein N-glycosylation. N-glycosylation occurs cotranslationally and the complex associates with the Sec61 complex at the channel-forming translocon complex that mediates protein translocation across the endoplasmic reticulum (ER). All subunits are required for a maximal enzyme activity. The protein is Dolichyl-diphosphooligosaccharide--protein glycosyltransferase subunit TMEM258 of Caenorhabditis briggsae.